Here is a 511-residue protein sequence, read N- to C-terminus: Serine hydroxymethyltransferase (511 aa).

K287 bears the N6-(pyridoxal phosphate)lysine mark.

The protein belongs to the SHMT family. Homotetramer. The cofactor is pyridoxal 5'-phosphate.

It catalyses the reaction (6R)-5,10-methylene-5,6,7,8-tetrahydrofolate + glycine + H2O = (6S)-5,6,7,8-tetrahydrofolate + L-serine. The protein operates within one-carbon metabolism; tetrahydrofolate interconversion. In terms of biological role, interconversion of serine and glycine. The chain is Serine hydroxymethyltransferase from Caenorhabditis briggsae.